The following is an 883-amino-acid chain: Lysine-specific demethylase JMJ29 (883 aa).

Disordered regions lie at residues 30–62 (KPFM…SAVK) and 161–204 (RTHS…SRKQ). The span at 34-43 (SKGSSPSSSS) shows a compositional bias: low complexity. Composition is skewed to polar residues over residues 161–172 (RTHSLSANSPEN) and 184–204 (SPAS…SRKQ). Zn(2+) contacts are provided by cysteine 209, cysteine 212, cysteine 223, cysteine 226, cysteine 232, cysteine 235, cysteine 252, cysteine 255, cysteine 338, cysteine 341, cysteine 363, and histidine 381. An RING-type; degenerate zinc finger spans residues 209-256 (CHQCLKGERITLLICSECEKTMFCLQCIRKWYPNLSEDDVVEKCPLCR). The B box-type; atypical zinc finger occupies 333-392 (DERVYCDHCATSIVDLHRSCPKCSYELCLKCCQEIREGSLSERPEMKFHYVDRGHRYMHG). The 232-residue stretch at 632–863 (PRTGILNIAT…ECLRLTEEFR (232 aa)) folds into the JmjC domain. Histidine 676 and aspartate 678 together coordinate Fe cation. Residues 713-743 (NKVDKQSTEDCNEKEEEEEEELNMPEISSNE) form a disordered region. Positions 722–735 (DCNEKEEEEEEELN) are enriched in acidic residues. The Nuclear localization signal signature appears at 755–762 (FRREDVPK). Histidine 831 provides a ligand contact to Fe cation.

It belongs to the JARID1 histone demethylase family. Requires Fe(2+) as cofactor. As to expression, expressed in inflorescences, roots, siliques, leaves and stems.

The protein resides in the nucleus. Functionally, may function as histone H3 lysine demethylase and be involved in regulation of gene expression. The protein is Lysine-specific demethylase JMJ29 of Arabidopsis thaliana (Mouse-ear cress).